The chain runs to 748 residues: Proton-associated sugar transporter A (748 aa).

6 consecutive transmembrane segments (helical) span residues 93 to 113 (ILFG…PVLL), 123 to 143 (SLVW…LGAW), 155 to 175 (RPFI…LLNG), 191 to 211 (WGLL…DSAD), 233 to 253 (IHAL…GIHW), and 268 to 288 (VIYL…LVSI). The interval 294–339 (RPPSEKRAAMKSPSLPLPPSPPVLPEEGPGDSLPSHTATNFSSPIS) is disordered. Residues 308 to 317 (LPLPPSPPVL) show a composition bias toward pro residues. Thr497 is subject to Phosphothreonine. 6 helical membrane-spanning segments follow: residues 533 to 553 (GWLS…EVVF), 573 to 593 (VTMG…YSAI), 600 to 620 (FLSV…GTGL), 627 to 647 (LYVV…LCTL), 685 to 705 (FLAQ…VGSA), and 708 to 728 (VMYF…LFVI).

Belongs to the glycoside-pentoside-hexuronide (GPH) cation symporter transporter (TC 2.A.2) family. As to expression, expressed in adult heart, brain, muscle and kidney, with very strong expression in brain. Also expressed in fetal brain, kidney and lung.

Its subcellular location is the membrane. The catalysed reaction is D-galactose(in) + H(+)(in) = D-galactose(out) + H(+)(out). It catalyses the reaction D-glucose(out) + H(+)(out) = D-glucose(in) + H(+)(in). Proton-associated glucose transporter in the brain. The polypeptide is Proton-associated sugar transporter A (Homo sapiens (Human)).